The following is a 147-amino-acid chain: Putative pre-16S rRNA nuclease (147 aa).

It belongs to the YqgF nuclease family.

The protein localises to the cytoplasm. Its function is as follows. Could be a nuclease involved in processing of the 5'-end of pre-16S rRNA. In Acinetobacter baylyi (strain ATCC 33305 / BD413 / ADP1), this protein is Putative pre-16S rRNA nuclease.